The chain runs to 175 residues: uncharacterized protein (175 aa).

Disordered regions lie at residues 68 to 112 (NKNN…DQPY) and 153 to 175 (PEKA…KLTT). The span at 94–105 (DEQPMMPYQQPP) shows a compositional bias: low complexity.

This sequence belongs to the asfivirus H171R family.

It localises to the virion. This is an uncharacterized protein from African swine fever virus (isolate Tick/Malawi/Lil 20-1/1983) (ASFV).